A 455-amino-acid polypeptide reads, in one-letter code: Bifunctional protein GlmU (455 aa).

The tract at residues 1–230 (MTKRNAIILA…FDESMGVNDR (230 aa)) is pyrophosphorylase. Residues 9–12 (LAAG), Lys23, Gln73, 78–79 (GT), 101–103 (SGD), Gly140, Glu155, Asn170, and Asn228 each bind UDP-N-acetyl-alpha-D-glucosamine. Residue Asp103 coordinates Mg(2+). Asn228 lines the Mg(2+) pocket. Positions 231–251 (VALARANKVMRNRINTHWMRE) are linker. An N-acetyltransferase region spans residues 252–455 (GVSMIDPETT…KENYAKKLPW (204 aa)). UDP-N-acetyl-alpha-D-glucosamine contacts are provided by Arg333 and Lys351. His363 acts as the Proton acceptor in catalysis. UDP-N-acetyl-alpha-D-glucosamine contacts are provided by Tyr366 and Asn377. Residues 386 to 387 (NY), Ser405, Ala423, and Arg440 each bind acetyl-CoA.

This sequence in the N-terminal section; belongs to the N-acetylglucosamine-1-phosphate uridyltransferase family. It in the C-terminal section; belongs to the transferase hexapeptide repeat family. As to quaternary structure, homotrimer. Mg(2+) serves as cofactor.

It localises to the cytoplasm. It carries out the reaction alpha-D-glucosamine 1-phosphate + acetyl-CoA = N-acetyl-alpha-D-glucosamine 1-phosphate + CoA + H(+). The catalysed reaction is N-acetyl-alpha-D-glucosamine 1-phosphate + UTP + H(+) = UDP-N-acetyl-alpha-D-glucosamine + diphosphate. It participates in nucleotide-sugar biosynthesis; UDP-N-acetyl-alpha-D-glucosamine biosynthesis; N-acetyl-alpha-D-glucosamine 1-phosphate from alpha-D-glucosamine 6-phosphate (route II): step 2/2. Its pathway is nucleotide-sugar biosynthesis; UDP-N-acetyl-alpha-D-glucosamine biosynthesis; UDP-N-acetyl-alpha-D-glucosamine from N-acetyl-alpha-D-glucosamine 1-phosphate: step 1/1. It functions in the pathway bacterial outer membrane biogenesis; LPS lipid A biosynthesis. In terms of biological role, catalyzes the last two sequential reactions in the de novo biosynthetic pathway for UDP-N-acetylglucosamine (UDP-GlcNAc). The C-terminal domain catalyzes the transfer of acetyl group from acetyl coenzyme A to glucosamine-1-phosphate (GlcN-1-P) to produce N-acetylglucosamine-1-phosphate (GlcNAc-1-P), which is converted into UDP-GlcNAc by the transfer of uridine 5-monophosphate (from uridine 5-triphosphate), a reaction catalyzed by the N-terminal domain. The polypeptide is Bifunctional protein GlmU (Limosilactobacillus reuteri (strain DSM 20016) (Lactobacillus reuteri)).